The sequence spans 264 residues: 3-methyl-2-oxobutanoate hydroxymethyltransferase (264 aa).

Positions 45 and 84 each coordinate Mg(2+). 3-methyl-2-oxobutanoate-binding positions include 45 to 46 (DS), aspartate 84, and lysine 112. Glutamate 114 is a binding site for Mg(2+). Residue glutamate 181 is the Proton acceptor of the active site.

The protein belongs to the PanB family. As to quaternary structure, homodecamer; pentamer of dimers. It depends on Mg(2+) as a cofactor.

The protein localises to the cytoplasm. The catalysed reaction is 3-methyl-2-oxobutanoate + (6R)-5,10-methylene-5,6,7,8-tetrahydrofolate + H2O = 2-dehydropantoate + (6S)-5,6,7,8-tetrahydrofolate. The protein operates within cofactor biosynthesis; (R)-pantothenate biosynthesis; (R)-pantoate from 3-methyl-2-oxobutanoate: step 1/2. In terms of biological role, catalyzes the reversible reaction in which hydroxymethyl group from 5,10-methylenetetrahydrofolate is transferred onto alpha-ketoisovalerate to form ketopantoate. The chain is 3-methyl-2-oxobutanoate hydroxymethyltransferase from Shewanella denitrificans (strain OS217 / ATCC BAA-1090 / DSM 15013).